A 236-amino-acid chain; its full sequence is Ribose-5-phosphate isomerase A (236 aa).

Substrate is bound by residues 31–34, 88–91, and 101–104; these read TGST, DGAD, and KGGG. Glu110 (proton acceptor) is an active-site residue. Lys128 contributes to the substrate binding site.

It belongs to the ribose 5-phosphate isomerase family. As to quaternary structure, homodimer.

It carries out the reaction aldehydo-D-ribose 5-phosphate = D-ribulose 5-phosphate. It participates in carbohydrate degradation; pentose phosphate pathway; D-ribose 5-phosphate from D-ribulose 5-phosphate (non-oxidative stage): step 1/1. Functionally, catalyzes the reversible conversion of ribose-5-phosphate to ribulose 5-phosphate. This Thermosynechococcus vestitus (strain NIES-2133 / IAM M-273 / BP-1) protein is Ribose-5-phosphate isomerase A.